The primary structure comprises 99 residues: MVKAPKGWRHRTRHIYRKRVREKGAVPPLSLVLIDYKPGDKVIIDPNPAIWSGLPHRRFCGKVGEVVGKRGKAYLVKVRDGDVYKTIIVRPEHLRPFKQ.

This sequence belongs to the eukaryotic ribosomal protein eL21 family.

The sequence is that of Large ribosomal subunit protein eL21 from Ignicoccus hospitalis (strain KIN4/I / DSM 18386 / JCM 14125).